Reading from the N-terminus, the 435-residue chain is Astacin-like metalloendopeptidase (435 aa).

The signal sequence occupies residues 1–23; it reads MGIMGSLWPWILTMLSLLGLSMG. In terms of domain architecture, Peptidase M12A spans 85–282; sequence RLLSVTNNKW…TRVCRLYNCS (198 aa). 2 disulfide bridges follow: Cys-132–Cys-281 and Cys-153–Cys-172. Residue His-182 participates in Zn(2+) binding. The active site involves Glu-183. His-186 and His-192 together coordinate Zn(2+). Low complexity predominate over residues 318-329; that stretch reads SEESGSSAPSGS. A disordered region spans residues 318 to 356; it reads SEESGSSAPSGSRTGGQSIAGLGNSQQGWEHPPQSTFSV. Positions 340 to 355 are enriched in polar residues; that stretch reads GNSQQGWEHPPQSTFS.

Interacts (via N-terminal domain) with SPACA3; the interaction occurs during fertilization. Requires Zn(2+) as cofactor. In terms of tissue distribution, ovary-specific. Expressed in secondary, antral and Graafian follicle oocytes. Expressed in the egg cells. Not detected in two-cell embryos. Not detected in naked oocytes, oocytes in primordial or unilaminar primary follicles, or in any other ovarian cells at pre-pubertal, pubertal or adult stages (at protein level). Ovary-specific.

The protein resides in the cytoplasm. The protein localises to the cell membrane. It localises to the cytoplasmic vesicle. It is found in the secretory vesicle. Its subcellular location is the cortical granule. Its activity is regulated as follows. Inhibited by wide spectrum metalloproteinase inhibitor batimastat (BB-94). Also inhibited by EDTA. Functionally, oocyte-specific oolemmal receptor involved in sperm and egg adhesion and fertilization. Plays a role in the polyspermy inhibition. Probably acts as a protease for the post-fertilization cleavage of ZP2. Cleaves the sperm-binding ZP2 at the surface of the zona pellucida after fertilization and cortical granule exocytosis, rendering the zona pellucida unable to support further sperm binding. This chain is Astacin-like metalloendopeptidase, found in Mus musculus (Mouse).